We begin with the raw amino-acid sequence, 261 residues long: Probable enoyl-CoA hydratase EchA17 (261 aa).

The protein belongs to the enoyl-CoA hydratase/isomerase family.

It carries out the reaction a (3S)-3-hydroxyacyl-CoA = a (2E)-enoyl-CoA + H2O. The catalysed reaction is a 4-saturated-(3S)-3-hydroxyacyl-CoA = a (3E)-enoyl-CoA + H2O. Functionally, could possibly oxidize fatty acids using specific components. The polypeptide is Probable enoyl-CoA hydratase EchA17 (echA17) (Mycobacterium bovis (strain BCG / Pasteur 1173P2)).